Consider the following 186-residue polypeptide: Potassium-transporting ATPase KdpC subunit (186 aa).

Residues 10–30 (LTIITMVLCGFLFPLAITLIG) traverse the membrane as a helical segment.

Belongs to the KdpC family. As to quaternary structure, the system is composed of three essential subunits: KdpA, KdpB and KdpC.

It is found in the cell membrane. Part of the high-affinity ATP-driven potassium transport (or Kdp) system, which catalyzes the hydrolysis of ATP coupled with the electrogenic transport of potassium into the cytoplasm. This subunit acts as a catalytic chaperone that increases the ATP-binding affinity of the ATP-hydrolyzing subunit KdpB by the formation of a transient KdpB/KdpC/ATP ternary complex. The chain is Potassium-transporting ATPase KdpC subunit from Staphylococcus aureus (strain MSSA476).